The chain runs to 63 residues: Sarcotoxin-1B (63 aa).

The signal sequence occupies residues 1-23 (MNFNKVFIFVALILAVFAGQSQA). Arginine amide is present on Arg62.

This sequence belongs to the cecropin family.

It is found in the secreted. Functionally, sarcotoxins, which are potent bactericidal proteins, are produced in response to injury. They are cytotoxic to both Gram-positive and Gram-negative bacteria. The protein is Sarcotoxin-1B of Sarcophaga peregrina (Flesh fly).